A 459-amino-acid polypeptide reads, in one-letter code: uncharacterized protein (459 aa).

A TRAM domain is found at 5 to 63 (PVEEGQKFPLTIRRMGINGEGIGYFKKAVVFVPGAITGEEVVVEAVKVRDRFTEAKLNK). 4 residues coordinate [4Fe-4S] cluster: C76, C82, C85, and C166. The S-adenosyl-L-methionine site is built by Q290, Y319, D340, and D388. Catalysis depends on C415, which acts as the Nucleophile.

It belongs to the class I-like SAM-binding methyltransferase superfamily. RNA M5U methyltransferase family.

This is an uncharacterized protein from Listeria monocytogenes serovar 1/2a (strain ATCC BAA-679 / EGD-e).